The sequence spans 381 residues: MKIAIVEDDINMRKSLELFFELQDDLEIVSFKNPKDALAKLDESFDLVITDINMPHMDGLEFLRLLEGKYESIVITGNATLNKAIDSIRLGVKDFFQKPFKPELLLESIYRTKKVLEFQKKHPLEKPLKKPHKHSFLAASKALEESKRQALKVASTDANVMLLGESGVGKEVFAHFIHQHSQRSKHPFIAINMSAIPEHLLESELFGYQKGAFTDATAPKMGLFESANKGTIFLDEIAEMPLQLQSKLLRVVQEKEITRLGDNKSVKIDVRFISATNANMKEKIAAKEFREDLFFRLQIVPITIAPLRERVEEILPIAEIKLKEVCDAYHLGPKSFSKNAAKCLLEYSWHGNVRELLGVVERAAILSEETEIQEKDLFLER.

A Response regulatory domain is found at 2–113 (KIAIVEDDIN…LLLESIYRTK (112 aa)). The residue at position 51 (aspartate 51) is a 4-aspartylphosphate. A Sigma-54 factor interaction domain is found at 136–365 (FLAASKALEE…LLGVVERAAI (230 aa)). ATP contacts are provided by residues 164–171 (GESGVGKE) and 227–236 (ANKGTIFLDE).

Post-translationally, phosphorylated by FlgS.

In terms of biological role, member of the two-component regulatory system FlgR/FlgS that induces the transcriptional induction of the genes needed in motility and flagellar biogenesis. Upon phosphorylation by FlgS, functions as a transcriptional regulator and activates transcription of RpoN-dependent flagellar genes. The chain is Transcriptional regulatory protein FlgR (flgR) from Helicobacter pylori (strain ATCC 700392 / 26695) (Campylobacter pylori).